A 451-amino-acid chain; its full sequence is Phosphoglucosamine mutase (451 aa).

Catalysis depends on serine 104, which acts as the Phosphoserine intermediate. Mg(2+)-binding residues include serine 104, aspartate 242, aspartate 244, and aspartate 246. Serine 104 is subject to Phosphoserine.

Belongs to the phosphohexose mutase family. It depends on Mg(2+) as a cofactor. Post-translationally, activated by phosphorylation.

It carries out the reaction alpha-D-glucosamine 1-phosphate = D-glucosamine 6-phosphate. Functionally, catalyzes the conversion of glucosamine-6-phosphate to glucosamine-1-phosphate. This Kocuria rhizophila (strain ATCC 9341 / DSM 348 / NBRC 103217 / DC2201) protein is Phosphoglucosamine mutase.